The following is a 1006-amino-acid chain: Retinoblastoma-related protein (1006 aa).

Residues 411–604 (TPVTTAMTTA…EKGSSMYNSL (194 aa)) form a domain A region. The pocket stretch occupies residues 411–855 (TPVTTAMTTA…NEIFVPAVKP (445 aa)). Residues 605–724 (IVARPALSAE…PGGGGETCAE (120 aa)) form a spacer region. A domain B region spans residues 725-855 (TAVNVFFSKI…NEIFVPAVKP (131 aa)). The segment covering 866–893 (AQSGSQVPEAKNNTNGVNPSSPRTSSFP) has biased composition (polar residues). A disordered region spans residues 866-898 (AQSGSQVPEAKNNTNGVNPSSPRTSSFPSLPDM).

It belongs to the retinoblastoma protein (RB) family.

The protein localises to the nucleus. Regulator of biological processes that recruits a histone deacetylase to control gene transcription. May play a role in the entry into mitosis, negatively regulating the cell proliferation. Formation of stable complexes with geminiviridae replication-associated proteins may create a cellular environment which favors viral DNA replication. The chain is Retinoblastoma-related protein (RB) from Scutellaria baicalensis (Baical skullcap).